We begin with the raw amino-acid sequence, 152 residues long: Ribosome maturation factor RimP (152 aa).

Belongs to the RimP family.

The protein resides in the cytoplasm. Functionally, required for maturation of 30S ribosomal subunits. The sequence is that of Ribosome maturation factor RimP from Desulfatibacillum aliphaticivorans.